Here is a 135-residue protein sequence, read N- to C-terminus: Small ribosomal subunit protein eS6 (135 aa).

This sequence belongs to the eukaryotic ribosomal protein eS6 family.

The sequence is that of Small ribosomal subunit protein eS6 from Halorubrum lacusprofundi (strain ATCC 49239 / DSM 5036 / JCM 8891 / ACAM 34).